The following is a 323-amino-acid chain: Methenyltetrahydromethanopterin cyclohydrolase (323 aa).

This sequence belongs to the MCH family.

It is found in the cytoplasm. It carries out the reaction 5,10-methenyl-5,6,7,8-tetrahydromethanopterin + H2O = N(5)-formyl-5,6,7,8-tetrahydromethanopterin + H(+). The protein operates within one-carbon metabolism; methanogenesis from CO(2); 5,10-methenyl-5,6,7,8-tetrahydromethanopterin from CO(2): step 3/3. Functionally, catalyzes the reversible interconversion of 5-formyl-H(4)MPT to methenyl-H(4)MPT(+). The protein is Methenyltetrahydromethanopterin cyclohydrolase of Methanococcus maripaludis (strain C5 / ATCC BAA-1333).